The following is a 485-amino-acid chain: Sodium-coupled neutral amino acid symporter 1 (485 aa).

Topologically, residues 1 to 74 (MMHFKSGLEL…EYIPGTTSLG (74 aa)) are cytoplasmic. The residue at position 6 (Ser6) is a Phosphoserine. Phosphothreonine is present on Thr11. Residues Ser25, Ser28, Ser49, and Ser52 each carry the phosphoserine modification. At Thr54 the chain carries Phosphothreonine. The residue at position 56 (Ser56) is a Phosphoserine. Residues 75–97 (MSVFNLSNAIMGSGILGLAFALA) form a helical membrane-spanning segment. Topologically, residues 98–112 (NTGILLFLILLTSVT) are extracellular. A helical transmembrane segment spans residues 113–133 (LLSIYSINLLLICSKETGCMV). Residues 134-148 (YEKLGEQVFGTTGKL) lie on the Cytoplasmic side of the membrane. The chain crosses the membrane as a helical span at residues 149-169 (VIFGATSLQNTGAMLSYLFIV). Residues 170-188 (KNELPSAIKSLMGEEDAFS) are Extracellular-facing. The chain crosses the membrane as a helical span at residues 189-211 (AWYVDGRVLVVMVTFGIILPLCL). The Cytoplasmic portion of the chain corresponds to 212–216 (LKNLG). A helical transmembrane segment spans residues 217–237 (YLGYTSGFSLSCMMFFLIVVI). Topologically, residues 238-273 (YKKFQTPCMSVEQNSTVSANVTDACTPKYVTFNSKT) are extracellular. A disulfide bridge links Cys245 with Cys262. N-linked (GlcNAc...) asparagine glycans are attached at residues Asn251 and Asn257. Residues 274–294 (VYALPTIAFAFVCHPSVLPIY) traverse the membrane as a helical segment. Topologically, residues 295 to 310 (SELKDRSQKKMQMVSN) are cytoplasmic. A helical transmembrane segment spans residues 311–331 (ISFFAMFVMYFLTAIFGYLTF). Over 332–348 (YEKVQSDLLHKYQSTGD) the chain is Extracellular. The chain crosses the membrane as a helical span at residues 349–369 (ILILTVRLAVIVAVILTVPVL). Over 370–391 (FFTVRSSLFELAKKTKFHLCRH) the chain is Cytoplasmic. Residues 392–412 (VLVTIILLIIINLLVIFIPSM) form a helical membrane-spanning segment. Residues 413 to 414 (KD) are Extracellular-facing. A helical transmembrane segment spans residues 415-435 (IFGVVGVTSANMLIFILPSSL). At 436–450 (YLKITNQDGDKGTQR) the chain is on the cytoplasmic side. Residues 451 to 471 (IWAALFLGLGVLFSLISIPLV) form a helical membrane-spanning segment. Over 472 to 485 (IYDWACSSGTDEGH) the chain is Extracellular.

The protein belongs to the amino acid/polyamine transporter 2 family. Post-translationally, N-glycosylation plays an important role in the L-glutamine transport. As to expression, specifically expressed in brain and retina (at protein level). Also detected in spleen, small intestine and lung.

The protein localises to the cell membrane. It catalyses the reaction L-glutamine(in) + Na(+)(in) = L-glutamine(out) + Na(+)(out). The enzyme catalyses L-alanine(in) + Na(+)(in) = L-alanine(out) + Na(+)(out). The catalysed reaction is L-histidine(in) + Na(+)(in) = L-histidine(out) + Na(+)(out). It carries out the reaction L-asparagine(in) + Na(+)(in) = L-asparagine(out) + Na(+)(out). It catalyses the reaction L-serine(in) + Na(+)(in) = L-serine(out) + Na(+)(out). The enzyme catalyses L-cysteine(in) + Na(+)(in) = L-cysteine(out) + Na(+)(out). The catalysed reaction is L-methionine(in) + Na(+)(in) = L-methionine(out) + Na(+)(out). It carries out the reaction glycine(in) + Na(+)(in) = glycine(out) + Na(+)(out). It catalyses the reaction L-threonine(in) + Na(+)(in) = L-threonine(out) + Na(+)(out). The enzyme catalyses L-proline(in) + Na(+)(in) = L-proline(out) + Na(+)(out). With respect to regulation, inhibited by alpha-(methylamino)isobutyric acid (MeAIB). Inhibited by lithium, potassium, choline ions, N-methylglucamine. The pH dependence has an allosteric effect on the transport. Functionally, symporter that cotransports short-chain neutral amino acids and sodium ions from the extraccellular to the intracellular side of the cell membrane. The transport is elctrogenic, pH dependent and driven by the Na(+) electrochemical gradient. Participates in the astroglia-derived glutamine transport into GABAergic interneurons for neurotransmitter GABA de novo synthesis. May also contributes to amino acid transport in placental trophoblast. Regulates synaptic plasticity. In Mus musculus (Mouse), this protein is Sodium-coupled neutral amino acid symporter 1.